Consider the following 862-residue polypeptide: Kinesin-like protein KIN-7E (862 aa).

The Kinesin motor domain maps to 24-346; it reads KILVLVRLRP…LLFACCAKEV (323 aa). 110-117 is an ATP binding site; sequence GQTSSGKT. Residues 355 to 428 adopt a coiled-coil conformation; sequence VMSDKALVKQ…RLEDFMKMVE (74 aa). Disordered stretches follow at residues 463–505 and 542–632; these read RTSF…QSEE and ANGE…TPLV. The span at 465 to 476 shows a compositional bias: polar residues; sequence SFISDGTSTPLS. Residues 494 to 505 show a composition bias toward basic and acidic residues; the sequence is MSPRHSGDQSEE. Over residues 612 to 621 the composition is skewed to polar residues; the sequence is DSMTSRGSDS. Residue lysine 734 forms a Glycyl lysine isopeptide (Lys-Gly) (interchain with G-Cter in ubiquitin) linkage.

It belongs to the TRAFAC class myosin-kinesin ATPase superfamily. Kinesin family. KIN-7 subfamily.

This Arabidopsis thaliana (Mouse-ear cress) protein is Kinesin-like protein KIN-7E.